Consider the following 155-residue polypeptide: 3-hydroxyacyl-[acyl-carrier-protein] dehydratase FabZ (155 aa).

His58 is a catalytic residue.

This sequence belongs to the thioester dehydratase family. FabZ subfamily.

It is found in the cytoplasm. It catalyses the reaction a (3R)-hydroxyacyl-[ACP] = a (2E)-enoyl-[ACP] + H2O. Functionally, involved in unsaturated fatty acids biosynthesis. Catalyzes the dehydration of short chain beta-hydroxyacyl-ACPs and long chain saturated and unsaturated beta-hydroxyacyl-ACPs. In Rhizobium leguminosarum bv. trifolii (strain WSM2304), this protein is 3-hydroxyacyl-[acyl-carrier-protein] dehydratase FabZ.